Consider the following 158-residue polypeptide: 2-C-methyl-D-erythritol 2,4-cyclodiphosphate synthase (158 aa).

A divalent metal cation-binding residues include Asp9 and His11. Residues 9–11 and 35–36 contribute to the 4-CDP-2-C-methyl-D-erythritol 2-phosphate site; these read DVH and HS. His43 serves as a coordination point for a divalent metal cation. Residues 57-59 and Arg143 contribute to the 4-CDP-2-C-methyl-D-erythritol 2-phosphate site; that span reads DIG.

It belongs to the IspF family. In terms of assembly, homotrimer. Requires a divalent metal cation as cofactor.

The catalysed reaction is 4-CDP-2-C-methyl-D-erythritol 2-phosphate = 2-C-methyl-D-erythritol 2,4-cyclic diphosphate + CMP. It functions in the pathway isoprenoid biosynthesis; isopentenyl diphosphate biosynthesis via DXP pathway; isopentenyl diphosphate from 1-deoxy-D-xylulose 5-phosphate: step 4/6. Involved in the biosynthesis of isopentenyl diphosphate (IPP) and dimethylallyl diphosphate (DMAPP), two major building blocks of isoprenoid compounds. Catalyzes the conversion of 4-diphosphocytidyl-2-C-methyl-D-erythritol 2-phosphate (CDP-ME2P) to 2-C-methyl-D-erythritol 2,4-cyclodiphosphate (ME-CPP) with a corresponding release of cytidine 5-monophosphate (CMP). The sequence is that of 2-C-methyl-D-erythritol 2,4-cyclodiphosphate synthase from Chromobacterium violaceum (strain ATCC 12472 / DSM 30191 / JCM 1249 / CCUG 213 / NBRC 12614 / NCIMB 9131 / NCTC 9757 / MK).